Here is a 104-residue protein sequence, read N- to C-terminus: Large ribosomal subunit protein uL23 (104 aa).

It belongs to the universal ribosomal protein uL23 family. As to quaternary structure, part of the 50S ribosomal subunit. Contacts protein L29, and trigger factor when it is bound to the ribosome.

Its function is as follows. One of the early assembly proteins it binds 23S rRNA. One of the proteins that surrounds the polypeptide exit tunnel on the outside of the ribosome. Forms the main docking site for trigger factor binding to the ribosome. The chain is Large ribosomal subunit protein uL23 from Leptospira borgpetersenii serovar Hardjo-bovis (strain JB197).